The chain runs to 95 residues: L-amino-acid oxidase (95 aa).

This sequence belongs to the flavin monoamine oxidase family. FIG1 subfamily. As to quaternary structure, homodimer; non-covalently linked. Requires FAD as cofactor. N-glycosylated. As to expression, expressed by the venom gland.

The protein resides in the secreted. The catalysed reaction is an L-alpha-amino acid + O2 + H2O = a 2-oxocarboxylate + H2O2 + NH4(+). It catalyses the reaction L-leucine + O2 + H2O = 4-methyl-2-oxopentanoate + H2O2 + NH4(+). It carries out the reaction L-phenylalanine + O2 + H2O = 3-phenylpyruvate + H2O2 + NH4(+). The enzyme catalyses L-tryptophan + O2 + H2O = indole-3-pyruvate + H2O2 + NH4(+). The catalysed reaction is L-methionine + O2 + H2O = 4-methylsulfanyl-2-oxobutanoate + H2O2 + NH4(+). It catalyses the reaction L-arginine + O2 + H2O = 5-guanidino-2-oxopentanoate + H2O2 + NH4(+). In terms of biological role, catalyzes an oxidative deamination of predominantly hydrophobic and aromatic L-amino acids, thus producing hydrogen peroxide that may contribute to the diverse toxic effects of this enzyme. Is highly active on L-Met, L-Leu, L-Phe, L-Trp, and L-Arg, and no weakly or no active on L-His, L-Tyr, L-Ile, L-Gln, and L-Lys. Exhibits diverse biological activities, such as antibacterial activity against both Gram-positive (B.subtilis) and Gram-negative (E.coli) bacteria, and inhibition of ADP- or collagen-induced platelet aggregation. Effects of snake L-amino oxidases on platelets are controversial, since they either induce aggregation or inhibit agonist-induced aggregation. These different effects are probably due to different experimental conditions. This protein may also induce hemorrhage, hemolysis, edema, apoptosis, and have antiparasitic activities. This is L-amino-acid oxidase from Naja oxiana (Central Asian cobra).